A 309-amino-acid polypeptide reads, in one-letter code: Porphobilinogen deaminase (309 aa).

An S-(dipyrrolylmethanemethyl)cysteine modification is found at Cys-244.

It belongs to the HMBS family. In terms of assembly, monomer. Requires dipyrromethane as cofactor.

The enzyme catalyses 4 porphobilinogen + H2O = hydroxymethylbilane + 4 NH4(+). Its pathway is porphyrin-containing compound metabolism; protoporphyrin-IX biosynthesis; coproporphyrinogen-III from 5-aminolevulinate: step 2/4. Its function is as follows. Tetrapolymerization of the monopyrrole PBG into the hydroxymethylbilane pre-uroporphyrinogen in several discrete steps. The polypeptide is Porphobilinogen deaminase (Rhizobium meliloti (strain 1021) (Ensifer meliloti)).